A 461-amino-acid chain; its full sequence is Decaprenylphosphoryl-beta-D-ribose oxidase (461 aa).

One can recognise an FAD-binding PCMH-type domain in the interval 19–194 (TAPSVANVLR…MRATIEMTPT (176 aa)). FAD is bound by residues 53–63 (ARGLGRSYGDN), glycine 117, 122–125 (TVGG), 129–132 (CDIH), isoleucine 184, and tyrosine 415.

It belongs to the DprE1 family. Monomer. Although forming apparent dimer in crystals, DprE1 does not dimerize appreciably in solution. Interacts with DprE2 to form an epimerase complex.

Its subcellular location is the periplasm. It catalyses the reaction trans,octa-cis-decaprenylphospho-beta-D-ribofuranose + FAD + H(+) = trans,octa-cis-decaprenylphospho-beta-D-erythro-pentofuranosid-2-ulose + FADH2. The protein operates within cell wall biogenesis; cell wall polysaccharide biosynthesis. Its activity is regulated as follows. Is inhibited by 8-nitro-benzothiazinones (BTZs) such as BTZ043 and PBTZ169; BTZs are a new class of antimycobacterial agents that kill M.tuberculosis in vitro, ex vivo, and in mouse models of tuberculosis. Is also inhibited by dinitrobenzamide derivatives (DNBs), which thus block formation of both cell-wall lipoarabinomannan and arabinogalactan via inhibition of decaprenyl-phospho-arabinose (DPA) synthesis; DNBs show high activity against intracellular growth of M.tuberculosis inside macrophages, including extensively drug resistant (XDR) strains. BTZs and DNBs are suicide inhibitors that act via covalent modification of DprE1; the essential nitro group of these compounds is reduced by DprE1 to a nitroso group, which then specifically reacts with Cys-387 of DprE1 to form an irreversible semimercaptal adduct. Many other compounds with diverse scaffolds were found to act as either covalent (e.g. nitroquinoxalines, nitroimidazoles) or non-covalent (e.g. the benzothiazole derivative TCA1, the 2-carboxyquinoxaline Ty38C, 8-pyrrole-benzothiazinones, 1,4-azaindoles, pyrazolopyridones, 4-aminoquinolone piperidine amides) DprE1 inhibitors. In terms of biological role, component of the DprE1-DprE2 complex that catalyzes the 2-step epimerization of decaprenyl-phospho-ribose (DPR) to decaprenyl-phospho-arabinose (DPA), a key precursor that serves as the arabinose donor required for the synthesis of cell-wall arabinans. DprE1 catalyzes the first step of epimerization, namely FAD-dependent oxidation of the C2' hydroxyl of DPR to yield the keto intermediate decaprenyl-phospho-2'-keto-D-arabinose (DPX). The intermediate DPX is then transferred to DprE2 subunit of the epimerase complex, most probably through a 'substrate channel' at the interface of DprE1-DprE2 complex. Can also use farnesyl-phosphoryl-beta-D-ribofuranose (FPR) as substrate in vitro. Functionally, dprE1 is a highly vulnerable and fully validated tuberculosis drug target. This Mycobacterium tuberculosis (strain CDC 1551 / Oshkosh) protein is Decaprenylphosphoryl-beta-D-ribose oxidase.